We begin with the raw amino-acid sequence, 346 residues long: L-malyl-CoA/beta-methylmalyl-CoA lyase (346 aa).

Positions 148 and 177 each coordinate Mg(2+). Substrate contacts are provided by residues 176–177 (VD) and 253–254 (LH).

This sequence belongs to the HpcH/HpaI aldolase family. The cofactor is Mg(2+). It depends on Mn(2+) as a cofactor.

It carries out the reaction (S)-malyl-CoA = glyoxylate + acetyl-CoA. The catalysed reaction is (2R,3S)-beta-methylmalyl-CoA = propanoyl-CoA + glyoxylate. Functionally, involved in the methylaspartate cycle. Catalyzes the reversible cleavage of beta-methylmalyl-CoA to propionyl-CoA and glyoxylate, as well as the reversible cleavage of (S)-malyl-CoA to acetyl-CoA and glyoxylate. In addition, it has a small malyl-CoA thioesterase activity. It can also catalyze the cleavage of (S)-citramalyl-CoA to acetyl-CoA and pyruvate. The chain is L-malyl-CoA/beta-methylmalyl-CoA lyase (citE1) from Haloarcula marismortui (strain ATCC 43049 / DSM 3752 / JCM 8966 / VKM B-1809) (Halobacterium marismortui).